We begin with the raw amino-acid sequence, 127 residues long: Fluoride-specific ion channel FluC (127 aa).

The next 3 helical transmembrane spans lie at 28 to 48 (LALF…SLAM), 73 to 93 (TGVL…ALLI), and 98 to 118 (VGLA…GLFL). Na(+) is bound by residues G77 and T80.

The protein belongs to the fluoride channel Fluc/FEX (TC 1.A.43) family.

It is found in the cell inner membrane. It carries out the reaction fluoride(in) = fluoride(out). Its activity is regulated as follows. Na(+) is not transported, but it plays an essential structural role and its presence is essential for fluoride channel function. Fluoride-specific ion channel. Important for reducing fluoride concentration in the cell, thus reducing its toxicity. This chain is Fluoride-specific ion channel FluC, found in Beijerinckia indica subsp. indica (strain ATCC 9039 / DSM 1715 / NCIMB 8712).